Here is a 225-residue protein sequence, read N- to C-terminus: Uridylate kinase (225 aa).

9–10 (GS) provides a ligand contact to ATP. Position 46 (Gly46) interacts with UMP. Gly47 and Arg51 together coordinate ATP. UMP is bound by residues Asp67 and 115-121 (THPAHTT). The ATP site is built by Thr141, Asn142, Tyr147, and Asp150.

Belongs to the UMP kinase family. As to quaternary structure, homohexamer.

It is found in the cytoplasm. The enzyme catalyses UMP + ATP = UDP + ADP. It participates in pyrimidine metabolism; CTP biosynthesis via de novo pathway; UDP from UMP (UMPK route): step 1/1. Inhibited by UTP. Catalyzes the reversible phosphorylation of UMP to UDP. In Methanococcus vannielii (strain ATCC 35089 / DSM 1224 / JCM 13029 / OCM 148 / SB), this protein is Uridylate kinase.